The following is a 127-amino-acid chain: Glycine cleavage system H protein (127 aa).

One can recognise a Lipoyl-binding domain in the interval 22-104 (KVRIGITDFA…YEKAWMIVIE (83 aa)). At Lys63 the chain carries N6-lipoyllysine.

The protein belongs to the GcvH family. The glycine cleavage system is composed of four proteins: P, T, L and H. (R)-lipoate serves as cofactor.

Its function is as follows. The glycine cleavage system catalyzes the degradation of glycine. The H protein shuttles the methylamine group of glycine from the P protein to the T protein. Functionally, is also involved in protein lipoylation via its role as an octanoyl/lipoyl carrier protein intermediate. In Geobacillus thermodenitrificans (strain NG80-2), this protein is Glycine cleavage system H protein.